The sequence spans 178 residues: CASP-like protein 4D1 (178 aa).

Topologically, residues 1-14 (MAPPPPSPPSVTLR) are cytoplasmic. A helical transmembrane segment spans residues 15-35 (TVLLLLRVLTAAFLVITVVLI). The Extracellular portion of the chain corresponds to 36-60 (STNTVTLEVSSTSIKMRFNDVYAYR). Residues 61 to 81 (YMLSAAVIGLLYAVVQLFLTI) form a helical membrane-spanning segment. The Cytoplasmic segment spans residues 82-149 (SQFATGTTHP…KFFSKGYASA (68 aa)). The chain crosses the membrane as a helical span at residues 150–170 (SLLLFAFVSLAVLSVFSSLAL). The Extracellular segment spans residues 171 to 178 (SKRPIQVS).

It belongs to the Casparian strip membrane proteins (CASP) family. As to quaternary structure, homodimer and heterodimers.

Its subcellular location is the cell membrane. In Arabidopsis lyrata subsp. lyrata (Lyre-leaved rock-cress), this protein is CASP-like protein 4D1.